We begin with the raw amino-acid sequence, 120 residues long: Ribosome-binding factor A (120 aa).

It belongs to the RbfA family. Monomer. Binds 30S ribosomal subunits, but not 50S ribosomal subunits or 70S ribosomes.

The protein localises to the cytoplasm. In terms of biological role, one of several proteins that assist in the late maturation steps of the functional core of the 30S ribosomal subunit. Associates with free 30S ribosomal subunits (but not with 30S subunits that are part of 70S ribosomes or polysomes). Required for efficient processing of 16S rRNA. May interact with the 5'-terminal helix region of 16S rRNA. In Chlamydia caviae (strain ATCC VR-813 / DSM 19441 / 03DC25 / GPIC) (Chlamydophila caviae), this protein is Ribosome-binding factor A.